A 599-amino-acid polypeptide reads, in one-letter code: Elongation factor 4 (599 aa).

Residues 3–185 (KNIRNFSIIA…AIVERIPPPS (183 aa)) form the tr-type G domain. GTP is bound by residues 15–20 (DHGKST) and 132–135 (NKID).

The protein belongs to the TRAFAC class translation factor GTPase superfamily. Classic translation factor GTPase family. LepA subfamily.

It localises to the cell membrane. The catalysed reaction is GTP + H2O = GDP + phosphate + H(+). Functionally, required for accurate and efficient protein synthesis under certain stress conditions. May act as a fidelity factor of the translation reaction, by catalyzing a one-codon backward translocation of tRNAs on improperly translocated ribosomes. Back-translocation proceeds from a post-translocation (POST) complex to a pre-translocation (PRE) complex, thus giving elongation factor G a second chance to translocate the tRNAs correctly. Binds to ribosomes in a GTP-dependent manner. The polypeptide is Elongation factor 4 (Syntrophomonas wolfei subsp. wolfei (strain DSM 2245B / Goettingen)).